The sequence spans 116 residues: uncharacterized protein (116 aa).

In terms of domain architecture, RRM spans 6 to 83 (ATVHVGNLAP…RCIRVSPANF (78 aa)).

It is found in the cytoplasm. The protein resides in the nucleus. This is an uncharacterized protein from Schizosaccharomyces pombe (strain 972 / ATCC 24843) (Fission yeast).